Consider the following 361-residue polypeptide: Peptide chain release factor 1 (361 aa).

Gln-233 bears the N5-methylglutamine mark. The disordered stretch occupies residues 282–310 (SKKQAERAQNRKSQVGSGDRSERIRTYNF).

It belongs to the prokaryotic/mitochondrial release factor family. Methylated by PrmC. Methylation increases the termination efficiency of RF1.

It is found in the cytoplasm. Its function is as follows. Peptide chain release factor 1 directs the termination of translation in response to the peptide chain termination codons UAG and UAA. This Treponema denticola (strain ATCC 35405 / DSM 14222 / CIP 103919 / JCM 8153 / KCTC 15104) protein is Peptide chain release factor 1.